Consider the following 365-residue polypeptide: tRNA(Met) cytidine acetate ligase (365 aa).

Residues 7 to 20, G96, N152, and R175 each bind ATP; that span reads IAEF…HKYL.

The protein belongs to the TmcAL family.

It is found in the cytoplasm. It catalyses the reaction cytidine(34) in elongator tRNA(Met) + acetate + ATP = N(4)-acetylcytidine(34) in elongator tRNA(Met) + AMP + diphosphate. Catalyzes the formation of N(4)-acetylcytidine (ac(4)C) at the wobble position of elongator tRNA(Met), using acetate and ATP as substrates. First activates an acetate ion to form acetyladenylate (Ac-AMP) and then transfers the acetyl group to tRNA to form ac(4)C34. In Streptococcus pneumoniae (strain Taiwan19F-14), this protein is tRNA(Met) cytidine acetate ligase.